The primary structure comprises 485 residues: UDP-N-acetylmuramate--L-alanine ligase (485 aa).

120–126 (GSHGKTT) provides a ligand contact to ATP.

Belongs to the MurCDEF family.

It is found in the cytoplasm. It carries out the reaction UDP-N-acetyl-alpha-D-muramate + L-alanine + ATP = UDP-N-acetyl-alpha-D-muramoyl-L-alanine + ADP + phosphate + H(+). Its pathway is cell wall biogenesis; peptidoglycan biosynthesis. Functionally, cell wall formation. This is UDP-N-acetylmuramate--L-alanine ligase from Rickettsia rickettsii (strain Iowa).